A 20-amino-acid polypeptide reads, in one-letter code: Putative serine protease (20 aa).

This sequence belongs to the peptidase S1 family.

The protein resides in the secreted. Binds the A.niger cell wall component alpha-1,3-glucan, a fungal pathogen-associated molecular pattern (PAMP) that activates the host immune response. The polypeptide is Putative serine protease (Galleria mellonella (Greater wax moth)).